We begin with the raw amino-acid sequence, 330 residues long: Ribosomal RNA small subunit methyltransferase H (330 aa).

Residues 40-42, Asp58, Phe85, Asp101, and Gln108 each bind S-adenosyl-L-methionine; that span reads GGY.

This sequence belongs to the methyltransferase superfamily. RsmH family.

Its subcellular location is the cytoplasm. The enzyme catalyses cytidine(1402) in 16S rRNA + S-adenosyl-L-methionine = N(4)-methylcytidine(1402) in 16S rRNA + S-adenosyl-L-homocysteine + H(+). Its function is as follows. Specifically methylates the N4 position of cytidine in position 1402 (C1402) of 16S rRNA. This Roseobacter denitrificans (strain ATCC 33942 / OCh 114) (Erythrobacter sp. (strain OCh 114)) protein is Ribosomal RNA small subunit methyltransferase H.